The following is a 142-amino-acid chain: Pleckstrin homology-like domain family A member 2 (142 aa).

A Phosphoserine modification is found at serine 3. Residues 7–99 form the PH domain; that stretch reads VLREGELEKR…WNASITLALI (93 aa).

The protein belongs to the PHLDA2 family.

The protein localises to the cytoplasm. The protein resides in the membrane. In terms of biological role, plays a role in regulating placenta growth. May act via its PH domain that competes with other PH domain-containing proteins, thereby preventing their binding to membrane lipids. The protein is Pleckstrin homology-like domain family A member 2 (PHLDA2) of Bos taurus (Bovine).